The following is a 526-amino-acid chain: G-protein coupled receptor 161 (526 aa).

Residues 1–27 (MNGSKNGTAVANSTNGLDDNGLMVLES) are Extracellular-facing. 3 N-linked (GlcNAc...) asparagine glycosylation sites follow: asparagine 2, asparagine 6, and asparagine 12. Residues 28-48 (VSIIIIAILACLGNLVIVVTL) form a helical membrane-spanning segment. The Cytoplasmic portion of the chain corresponds to 49-60 (YKKPYLLTPSNK). A helical membrane pass occupies residues 61–81 (FVFSLTSSNLLLSVLMLPFVV). Topologically, residues 82–98 (ASSVRRDWMFGVVWCNF) are extracellular. Cysteine 96 and cysteine 174 form a disulfide bridge. N-linked (GlcNAc...) asparagine glycosylation is present at asparagine 97. Residues 99-119 (TALLHLLVSSSSMLTLGAIAI) traverse the membrane as a helical segment. Residues 120 to 139 (DRYYAVLYPMIYPMKITGNR) lie on the Cytoplasmic side of the membrane. Residues 140-160 (AVLAIVYIWLHSLVGCLPPLF) traverse the membrane as a helical segment. Residues 161–186 (GWSSFEFDRFKWTCTVSWHKEISYTA) are Extracellular-facing. The chain crosses the membrane as a helical span at residues 187 to 207 (FWVTWCCLLPLVAMLVCYGVI). Residues 208–263 (FRVARIKARKVYCGSVVVSQEESSSQNNGRKNSNTSTSSSGSRKSLIYSGSQCKAF) are Cytoplasmic-facing. The disordered stretch occupies residues 231 to 250 (SSQNNGRKNSNTSTSSSGSR). A helical membrane pass occupies residues 264–284 (ITILVVLGTFLTTWGPYVVVI). Residues 285–300 (STEALLGKNSVSPQVE) lie on the Extracellular side of the membrane. Residues 301–321 (TLVSWLSFTSAVCHPLIYGLW) form a helical membrane-spanning segment. Residues 322–526 (NKTVRKELLG…EEEMEREEKM (205 aa)) lie on the Cytoplasmic side of the membrane. The tract at residues 505 to 526 (IDEGIVKDDDDDEEEMEREEKM) is disordered. A compositionally biased stretch (acidic residues) spans 512–526 (DDDDDEEEMEREEKM).

This sequence belongs to the G-protein coupled receptor 1 family.

The protein localises to the cell projection. Its subcellular location is the cilium membrane. The protein resides in the cell membrane. In terms of biological role, key negative regulator of Shh signaling during neural tube development. Recruited to primary cilia and acts as a regulator of the PKA-dependent basal repression machinery in Shh signaling by increasing cAMP levels, leading to promote the PKA-dependent processing of gli3 into gli3r and repress the Shh signaling. In presence of shh, it is removed from primary cilia, preventing its activity and allowing activation of the Shh signaling. Required in left/right patterning by modulating Ca(2+) levels in the cells surrounding the Kupffer vesicle. The polypeptide is G-protein coupled receptor 161 (gpr161) (Danio rerio (Zebrafish)).